Consider the following 494-residue polypeptide: Glutamate--tRNA ligase (494 aa).

The 'HIGH' region motif lies at 15–25; that stretch reads PSPTGNPHVGL. Residues Cys112, Cys114, Cys139, and Glu141 each coordinate Zn(2+). Positions 260-264 match the 'KMSKS' region motif; it reads KLSKR. Lys263 contributes to the ATP binding site.

It belongs to the class-I aminoacyl-tRNA synthetase family. Glutamate--tRNA ligase type 1 subfamily. Monomer. Zn(2+) is required as a cofactor.

Its subcellular location is the cytoplasm. The catalysed reaction is tRNA(Glu) + L-glutamate + ATP = L-glutamyl-tRNA(Glu) + AMP + diphosphate. Catalyzes the attachment of glutamate to tRNA(Glu) in a two-step reaction: glutamate is first activated by ATP to form Glu-AMP and then transferred to the acceptor end of tRNA(Glu). The protein is Glutamate--tRNA ligase of Streptomyces coelicolor (strain ATCC BAA-471 / A3(2) / M145).